The chain runs to 758 residues: Spastin (758 aa).

The tract at residues 1 to 103 is disordered; the sequence is MVRTKNQSSS…SPRSGHHHSY (103 aa). The Cytoplasmic segment spans residues 1-121; the sequence is MVRTKNQSSS…KQNLYVVSFP (121 aa). An interaction with atl region spans residues 1 to 159; the sequence is MVRTKNQSSS…VIYRPHRRDC (159 aa). Positions 1-210 are required for localization to punctate cytoplasmic foci; it reads MVRTKNQSSS…RPIQPLEMAA (210 aa). 4 stretches are compositionally biased toward low complexity: residues 8–28, 43–58, 66–76, and 85–95; these read SSSSSASSSSTKSPIKSSSGA, RSSSASNVAAVVAGGS, SSNRRSPGSSP, and TDDLTPTTCSP. An intramembrane region (helical) is located at residues 122–142; sequence IIFLFNVLRSLIYQLFCIFRY. Over 143–758 the chain is Cytoplasmic; that stretch reads LYGASTKVIY…WSQDYGDITI (616 aa). Composition is skewed to polar residues over residues 169-180 and 189-198; these read SKEQQQSLNHPS and QEQQLSNQPQ. The disordered stretch occupies residues 169–202; that stretch reads SKEQQQSLNHPSELNREGDGQEQQLSNQPQRFRP. Residues 208–758 form a sufficient for interaction with microtubules and microtubule severing region; sequence MAANRPGGGY…WSQDYGDITI (551 aa). The MIT domain occupies 233–308; that stretch reads HRRAFEYISK…SMARDRLHFL (76 aa). The interval 353 to 454 is disordered; the sequence is RVRSSGYGPK…GPSGSGASTP (102 aa). 2 stretches are compositionally biased toward polar residues: residues 390-406 and 425-454; these read NKSQTLPRNLGSKTSVG and QFSSGRNTPPQRSRTPINNNGPSGSGASTP. The residue at position 439 (Thr439) is a Phosphothreonine. The segment at 443 to 455 is required for interaction with microtubules; it reads NNGPSGSGASTPV. 523–530 is an ATP binding site; it reads GPPGNGKT.

This sequence belongs to the AAA ATPase family. Spastin subfamily. Homohexamer. The homohexamer is stabilized by ATP-binding. The homohexamer may adopt a ring conformation through which microtubules pass prior to being severed. Interacts with microtubules. Interacts with atl; may be involved in microtubule dynamics.

It is found in the membrane. It localises to the cytoplasm. Its subcellular location is the cytoskeleton. The protein resides in the microtubule organizing center. The protein localises to the centrosome. It is found in the chromosome. It localises to the lipid droplet. The catalysed reaction is n ATP + n H2O + a microtubule = n ADP + n phosphate + (n+1) alpha/beta tubulin heterodimers.. Its function is as follows. ATP-dependent microtubule severing protein. Stimulates microtubule minus-end depolymerization and poleward microtubule flux in the mitotic spindle. Regulates microtubule stability in the neuromuscular junction synapse. Involved in lipid metabolism by regulating the size and distribution of lipid droplets. Involved in axon regeneration by regulating microtubule severing. This Drosophila melanogaster (Fruit fly) protein is Spastin.